Here is a 429-residue protein sequence, read N- to C-terminus: Proton extrusion protein PxcA (429 aa).

The segment at 139–161 (LNGPEAPQTNGDRPDNKPKVETV) is disordered. The span at 150-161 (DRPDNKPKVETV) shows a compositional bias: basic and acidic residues. Helical transmembrane passes span 211-231 (FLLT…IAIT), 306-326 (AYEN…ILLI), 353-373 (LIIL…WEII), and 389-409 (FNFL…KYWI).

Belongs to the CemA family.

The protein resides in the cell inner membrane. In terms of biological role, required for H(+) efflux immediately after light irradiation to form a rapid H(+) concentration gradient across the thylakoid membranes. Together with PxcL, contributes to transient H(+) uptake following dark to light transition. This Picosynechococcus sp. (strain ATCC 27264 / PCC 7002 / PR-6) (Agmenellum quadruplicatum) protein is Proton extrusion protein PxcA.